The primary structure comprises 234 residues: Large ribosomal subunit protein uL1 (234 aa).

This sequence belongs to the universal ribosomal protein uL1 family. In terms of assembly, part of the 50S ribosomal subunit.

Binds directly to 23S rRNA. The L1 stalk is quite mobile in the ribosome, and is involved in E site tRNA release. Functionally, protein L1 is also a translational repressor protein, it controls the translation of the L11 operon by binding to its mRNA. This is Large ribosomal subunit protein uL1 from Tolumonas auensis (strain DSM 9187 / NBRC 110442 / TA 4).